Consider the following 646-residue polypeptide: bZIP transcription factor 39 (646 aa).

At 1-311 (MAEPALLDPT…KSKSKTKTKK (311 aa)) the chain is on the cytoplasmic side. Residues 25–172 (HELPLAGGGG…GGTVCEEEED (148 aa)) are disordered. The segment covering 43–53 (LDGLEFDLPGD) has biased composition (low complexity). Basic and acidic residues predominate over residues 59 to 69 (FLLRSPERDDS). Over residues 71–98 (EGSAAGSGPTASPSSSPTTSASNSAVAN) the composition is skewed to low complexity. Basic and acidic residues predominate over residues 103 to 113 (EVKHEESDEGR). Positions 159-172 (DSDEGGTVCEEEED) are enriched in acidic residues. The bZIP domain occupies 172–232 (DERRAARLMR…AENATLRQQL (61 aa)). Residues 174–205 (RRAARLMRNRESAQLSRQRKKRYVEELEEKVK) are basic motif. A leucine-zipper region spans residues 211-218 (INDLNSRI). Positions 272–308 (LVPIPRLKPQQPVPSSKVVKKPESKKTVENKSKSKTK) are disordered. Positions 279-288 (KPQQPVPSSK) are enriched in low complexity. Residues 291-303 (KKPESKKTVENKS) are compositionally biased toward basic and acidic residues. Residues 312 to 332 (VASVSLLGLLLIMLVFGAFIP) form a helical membrane-spanning segment. Residues 333 to 646 (GFNHNFGMCG…FKSSSPHLVN (314 aa)) are Lumenal-facing. Asn371, Asn399, Asn525, Asn530, Asn565, and Asn571 each carry an N-linked (GlcNAc...) asparagine glycan. Residues 560 to 585 (TGKTANNTEPFNRTSESSSKLPDSKP) form a disordered region. Residues 562-585 (KTANNTEPFNRTSESSSKLPDSKP) show a composition bias toward polar residues.

Belongs to the bZIP family. In terms of tissue distribution, highly expressed in leaf blade, and at lower levels in roots, leaf sheaths, flowers and seeds.

Its subcellular location is the endoplasmic reticulum membrane. The protein resides in the nucleus. Its function is as follows. Transcription factor involved in endoplasmic reticulum (ER) stress response. Acts as a ER stress sensor and activates the transcription factor BZIP50 and the chaperone BIP1. This Oryza sativa subsp. japonica (Rice) protein is bZIP transcription factor 39.